The chain runs to 172 residues: MASKWNWSGTKGRRTPRRPYGRPYKSSVPTTRVVVHQSAVLKKDEVVGTEIKPEGDVARYKMKKVMLTCTLRMAPGELVNYLIVKCNSPISSWSAAFTSPALLVKESCQDMITIIAKGKVESTGVAGTDCTKSFNRFIKLGAGITQTQHLYVVLYTSVALKAVLEHRVYVEV.

Residues Met-1–Ser-26 form a disordered region. Residues Lys-11 to Tyr-20 are compositionally biased toward basic residues.

Belongs to the nanoviridae capsid protein family.

Its subcellular location is the virion. This chain is Capsid protein (DNA-S), found in Faba bean necrotic yellows virus (isolate Syrian SV292-88) (FBNYV).